A 94-amino-acid chain; its full sequence is Small ribosomal subunit protein bS18 (94 aa).

It belongs to the bacterial ribosomal protein bS18 family. In terms of assembly, part of the 30S ribosomal subunit. Forms a tight heterodimer with protein bS6.

In terms of biological role, binds as a heterodimer with protein bS6 to the central domain of the 16S rRNA, where it helps stabilize the platform of the 30S subunit. The polypeptide is Small ribosomal subunit protein bS18 (Leptothrix cholodnii (strain ATCC 51168 / LMG 8142 / SP-6) (Leptothrix discophora (strain SP-6))).